Consider the following 560-residue polypeptide: Nibrin homolog (560 aa).

In terms of domain architecture, FHA spans 25 to 87 (YKVGRKDCDV…YGTFFNKVQG (63 aa)). One can recognise a BRCT domain in the interval 115–190 (TFRLSFVPIV…KQIVLGDWFK (76 aa)). The short motif at 511–518 (YKRGTVID) is the Nuclear localization signal element.

It belongs to the Nibrin family. As to quaternary structure, component of the MRN complex composed of two heterodimers RAD50 and MRE11 associated with a single NBS1.

It localises to the nucleus. The protein localises to the chromosome. Its function is as follows. Component of the MRN complex, which plays a central role in double-strand break (DSB) repair, DNA recombination, maintenance of telomere integrity and meiosis. The MRN complex is involved in the repair of DNA double-strand breaks (DSBs) via homologous recombination (HR), an error-free mechanism which primarily occurs during S and G2 phases. The complex (1) mediates the end resection of damaged DNA, which generates proper single-stranded DNA, a key initial steps in HR, and is (2) required for the recruitment of other repair factors and efficient activation of ATM and ATR upon DNA damage. The MRN complex possesses single-strand endonuclease activity and double-strand-specific 3'-5' exonuclease activity, which are provided by MRE11, to initiate end resection, which is required for single-strand invasion and recombination. Within the MRN complex, NBS1 acts as a protein-protein adapter, which specifically recognizes and binds phosphorylated proteins, promoting their recruitment to DNA damage sites. Recruits MRE11 and RAD50 components of the MRN complex to DSBs in response to DNA damage. The chain is Nibrin homolog from Oryza sativa subsp. indica (Rice).